We begin with the raw amino-acid sequence, 149 residues long: Deoxyuridine 5'-triphosphate nucleotidohydrolase (149 aa).

Substrate-binding positions include arginine 65–glycine 67, asparagine 78, threonine 82–aspartate 84, and lysine 92.

The protein belongs to the dUTPase family. Mg(2+) is required as a cofactor.

The catalysed reaction is dUTP + H2O = dUMP + diphosphate + H(+). Its pathway is pyrimidine metabolism; dUMP biosynthesis; dUMP from dCTP (dUTP route): step 2/2. This enzyme is involved in nucleotide metabolism: it produces dUMP, the immediate precursor of thymidine nucleotides and it decreases the intracellular concentration of dUTP so that uracil cannot be incorporated into DNA. This chain is Deoxyuridine 5'-triphosphate nucleotidohydrolase, found in Chlorobium chlorochromatii (strain CaD3).